A 382-amino-acid polypeptide reads, in one-letter code: uncharacterized protein (382 aa).

This is an uncharacterized protein from Frog virus 3 (isolate Goorha) (FV-3).